A 385-amino-acid chain; its full sequence is DNA replication and repair protein RecF (385 aa).

30–37 contributes to the ATP binding site; that stretch reads GRNGQGKT.

Belongs to the RecF family.

The protein resides in the cytoplasm. In terms of biological role, the RecF protein is involved in DNA metabolism; it is required for DNA replication and normal SOS inducibility. RecF binds preferentially to single-stranded, linear DNA. It also seems to bind ATP. The polypeptide is DNA replication and repair protein RecF (Leifsonia xyli subsp. xyli (strain CTCB07)).